The chain runs to 597 residues: Nuclear factor erythroid 2-related factor 2 (597 aa).

Positions 29–31 (DLG) match the DLG motif motif. Ser40 is modified (phosphoserine; by PKC). Residues 79-82 (ETGE) carry the ETGE motif motif. The residue at position 207 (Ser207) is a Phosphoserine. A disordered region spans residues 327-440 (TMEFNDSDSG…APFTKDKHSS (114 aa)). Over residues 333–345 (SDSGISLNTSPSR) the composition is skewed to polar residues. Residues Lys454, Lys464, and Lys479 are each glycosylated (N-linked (Glc) (glycation) lysine). One can recognise a bZIP domain in the interval 489 to 552 (LIRDIRRRGK…HLLKRRLSTL (64 aa)). A glycan (N-linked (Glc) (glycation) arginine) is linked at Arg491. Residues 491 to 510 (RDIRRRGKNKVAAQNCRKRK) are basic motif. Residues 514–521 (IVELEQDL) form a leucine-zipper region. Arg561 carries an N-linked (Glc) (glycation) arginine glycan. Residues 563–597 (EDGKPYSPSEYSLQQTRDGNVFLVPKSKKPDTKKN) form a disordered region. An N-linked (Glc) (glycation) lysine glycan is attached at Lys566. Residues 571–580 (SEYSLQQTRD) show a composition bias toward polar residues. The segment at 583–588 (VFLVPK) is mediates interaction with CHD6 and is necessary to activate transcription. N6-acetyllysine; by CREBBP occurs at positions 588 and 591.

It belongs to the bZIP family. CNC subfamily. In terms of assembly, heterodimer; heterodimerizes with small Maf proteins. Interacts (via the bZIP domain) with MAFG and MAFK; required for binding to antioxidant response elements (AREs) on DNA. Interacts with KEAP1; the interaction is direct and promotes ubiquitination by the BCR(KEAP1) E3 ubiquitin ligase complex. Forms a ternary complex with PGAM5 and KEAP1. Interacts with EEF1D at heat shock promoter elements (HSE). Interacts via its leucine-zipper domain with the coiled-coil domain of PMF1. Interacts with CHD6; involved in activation of the transcription. Interacts with ESRRB; represses NFE2L2 transcriptional activity. Interacts with MOTS-c, a peptide produced by the mitochondrially encoded 12S rRNA MT-RNR1; the interaction occurs in the nucleus following metabolic stress. Post-translationally, ubiquitinated in the cytoplasm by the BCR(KEAP1) E3 ubiquitin ligase complex leading to its degradation. In response to oxidative stress, electrophile metabolites, such as sulforaphane, modify KEAP1, leading to inhibit activity of the BCR(KEAP1) complex, promoting NFE2L2/NRF2 nuclear accumulation and activity. In response to autophagy, the BCR(KEAP1) complex is inactivated. Phosphorylated by EIF2AK3/PERK following unfolded protein response (UPR), promoting dissociation from its cytoplasmic inhibitor KEAP1, followed by its translocation into the nucleus. Phosphorylation of Ser-40 by PKC in response to oxidative stress dissociates NFE2L2 from its cytoplasmic inhibitor KEAP1, promoting its translocation into the nucleus. In terms of processing, acetylation at Lys-588 and Lys-591 increases nuclear localization whereas deacetylation by SIRT1 enhances cytoplasmic presence. Post-translationally, glycation impairs transcription factor activity by preventing heterodimerization with small Maf proteins. Deglycation by FN3K restores activity. Widely expressed. Highest expression in liver, skeletal muscle, luminal cells of the stomach and intestine, lining of the bronchi and alveoli, and in renal tubules; followed by heart, spleen, testis and brain.

It is found in the cytoplasm. The protein localises to the cytosol. The protein resides in the nucleus. In terms of biological role, transcription factor that plays a key role in the response to oxidative stress: binds to antioxidant response (ARE) elements present in the promoter region of many cytoprotective genes, such as phase 2 detoxifying enzymes, and promotes their expression, thereby neutralizing reactive electrophiles. In normal conditions, ubiquitinated and degraded in the cytoplasm by the BCR(KEAP1) complex. In response to oxidative stress, electrophile metabolites inhibit activity of the BCR(KEAP1) complex, promoting nuclear accumulation of NFE2L2/NRF2, heterodimerization with one of the small Maf proteins and binding to ARE elements of cytoprotective target genes. The NFE2L2/NRF2 pathway is also activated in response to selective autophagy: autophagy promotes interaction between KEAP1 and SQSTM1/p62 and subsequent inactivation of the BCR(KEAP1) complex, leading to NFE2L2/NRF2 nuclear accumulation and expression of cytoprotective genes. The NFE2L2/NRF2 pathway is also activated during the unfolded protein response (UPR), contributing to redox homeostasis and cell survival following endoplasmic reticulum stress. May also be involved in the transcriptional activation of genes of the beta-globin cluster by mediating enhancer activity of hypersensitive site 2 of the beta-globin locus control region. Also plays an important role in the regulation of the innate immune response. It is a critical regulator of the innate immune response and survival during sepsis by maintaining redox homeostasis and restraint of the dysregulation of pro-inflammatory signaling pathways like MyD88-dependent and -independent and TNF-alpha signaling. Suppresses macrophage inflammatory response by blocking pro-inflammatory cytokine transcription and the induction of IL6. Binds to the proximity of pro-inflammatory genes in macrophages and inhibits RNA Pol II recruitment. The inhibition is independent of the Nrf2-binding motif and reactive oxygen species level. Represses antiviral cytosolic DNA sensing by suppressing the expression of the adapter protein STING1 and decreasing responsiveness to STING1 agonists while increasing susceptibility to infection with DNA viruses. The protein is Nuclear factor erythroid 2-related factor 2 of Mus musculus (Mouse).